We begin with the raw amino-acid sequence, 825 residues long: PR domain zinc finger protein 1 (825 aa).

One can recognise an SET domain in the interval 84 to 201 (PRNLLFKYAT…ANQELLVWYC (118 aa)). The span at 324 to 361 (ITRSPIPSSTTPSPSARSSPDQSLKSSSPHSSPGNTVS) shows a compositional bias: low complexity. The segment at 324-369 (ITRSPIPSSTTPSPSARSSPDQSLKSSSPHSSPGNTVSPVGPGSQE) is disordered. Residues 527 to 574 (HVVQPKATSAAMAAPSSDEAMNLIKNKRNMTGYKTLPYPLKKQNGKIK) are interaction with PIAS1. 4 C2H2-type zinc fingers span residues 575–597 (YECNVCAKTFGQLSNLKVHLRVH), 603–625 (FKCQTCNKGFTQLAHLQKHYLVH), 631–653 (HECQVCHKRFSSTSNLKTHLRLH), and 659–681 (YQCKVCPAKFTQFVHLKLHKRLH). Lysine 816 is covalently cross-linked (Glycyl lysine isopeptide (Lys-Gly) (interchain with G-Cter in SUMO1); alternate). A Glycyl lysine isopeptide (Lys-Gly) (interchain with G-Cter in SUMO2); alternate cross-link involves residue lysine 816.

Belongs to the class V-like SAM-binding methyltransferase superfamily. As to quaternary structure, interacts with PRMT5. Interacts with FBXO10. Interacts with FBXO11. Interacts with multiple nuclear sumoylation E3 ligases, including CBX4, PIAS1, PIAS2, PIAS3, PIAS4, PML and RNF4, but not RANBP2. Interacts with LDB1, SMARCD3 and SMARCC1. Interacts with EEIG1; following TNFSF11/RANKL stimulation in bone marrow-derived macrophages, the interaction promotes the binding of PRDM1/BLIMP1 to the gene promoter of IRF8. Sumoylation at Lys-816 by PIAS1 augments transcriptional repressor activity, and is critical for plasma cell differentiation. Can be sumoylated with SUMO1 and SUMO2 by PML. Degradation of the wild-type protein mostly depends upon sumoylation, rather than ubiquitination. Desumoylated by SENP1 and SENP6. In terms of processing, ubiquitinated by the SCF(FBXO11) complex, leading to its degradation by the proteasome.

It is found in the nucleus. Its subcellular location is the cytoplasm. Transcription factor that mediates a transcriptional program in various innate and adaptive immune tissue-resident lymphocyte T cell types such as tissue-resident memory T (Trm), natural killer (trNK) and natural killer T (NKT) cells and negatively regulates gene expression of proteins that promote the egress of tissue-resident T-cell populations from non-lymphoid organs. Plays a role in the development, retention and long-term establishment of adaptive and innate tissue-resident lymphocyte T cell types in non-lymphoid organs, such as the skin and gut, but also in other nonbarrier tissues like liver and kidney, and therefore may provide immediate immunological protection against reactivating infections or viral reinfection. Binds specifically to the PRDI element in the promoter of the beta-interferon gene. Drives the maturation of B-lymphocytes into Ig secreting cells. Associates with the transcriptional repressor ZNF683 to chromatin at gene promoter regions. Binds to the promoter and acts as a transcriptional repressor of IRF8, thereby promotes transcription of osteoclast differentiation factors such as NFATC1 and EEIG1. This Homo sapiens (Human) protein is PR domain zinc finger protein 1 (PRDM1).